The sequence spans 236 residues: uncharacterized protein (236 aa).

3 disordered regions span residues 1–48, 67–122, and 134–192; these read MHLR…RTFS, VHTP…HSPR, and KLHP…PNNT. The segment covering 85 to 99 has biased composition (basic residues); it reads RAHRTAKHPARRQSC. Pro residues predominate over residues 180–189; the sequence is PSPAIKPSPP.

This is an uncharacterized protein from Encephalitozoon cuniculi (strain GB-M1) (Microsporidian parasite).